The primary structure comprises 147 residues: Hemoglobin subunit epsilon-4 (147 aa).

A Globin domain is found at 3–147 (HFTTEEKAAV…VANALAHKYH (145 aa)). H64 and H93 together coordinate heme b.

The protein belongs to the globin family. As to expression, red blood cells.

Hemoglobin epsilon chain is a beta-type chain found in early embryos. In Bos taurus (Bovine), this protein is Hemoglobin subunit epsilon-4 (HBE4).